A 359-amino-acid polypeptide reads, in one-letter code: Guanine nucleotide-binding protein-like alpha-11 subunit (359 aa).

Gly2 is lipidated: N-myristoyl glycine. The region spanning 29–359 is the G-alpha domain; the sequence is KLIKILMMGN…YVKKILEDTI (331 aa). The tract at residues 32 to 45 is G1 motif; that stretch reads KILMMGNENSAKST. Ser44 contributes to the Mg(2+) binding site. The interval 176–185 is G2 motif; it reads DIIRCSKNNQ. GTP contacts are provided by residues 178–185, 204–208, and 281–284; these read IRCSKNNQ, DTGNQ, and NKKE. The segment at 200–209 is G3 motif; sequence FVFVDTGNQK. A G4 motif region spans residues 277–284; the sequence is IVLFNKKE. The G5 motif stretch occupies residues 337 to 342; the sequence is FNSSDT.

This sequence belongs to the G-alpha family.

This Dictyostelium discoideum (Social amoeba) protein is Guanine nucleotide-binding protein-like alpha-11 subunit (gpaK).